We begin with the raw amino-acid sequence, 199 residues long: Small ribosomal subunit protein uS2 (199 aa).

The protein belongs to the universal ribosomal protein uS2 family.

The sequence is that of Small ribosomal subunit protein uS2 (rps2) from Thermoplasma acidophilum (strain ATCC 25905 / DSM 1728 / JCM 9062 / NBRC 15155 / AMRC-C165).